We begin with the raw amino-acid sequence, 539 residues long: Phospho-2-dehydro-3-deoxyheptonate aldolase 2, chloroplastic (539 aa).

Disordered regions lie at residues 1-23 (MALATNSAAVSGGAAAAASSAPQ) and 41-70 (VHAADPAKSNGPVQAAAKASSPSTVAAPEK). The N-terminal 54 residues, 1 to 54 (MALATNSAAVSGGAAAAASSAPQPRLAATFLPMRRRTVSAVHAADPAKSNGPVQ), are a transit peptide targeting the chloroplast. Residues 7–21 (SAAVSGGAAAAASSA) show a composition bias toward low complexity.

This sequence belongs to the class-II DAHP synthase family.

The protein resides in the plastid. Its subcellular location is the chloroplast. The catalysed reaction is D-erythrose 4-phosphate + phosphoenolpyruvate + H2O = 7-phospho-2-dehydro-3-deoxy-D-arabino-heptonate + phosphate. It participates in metabolic intermediate biosynthesis; chorismate biosynthesis; chorismate from D-erythrose 4-phosphate and phosphoenolpyruvate: step 1/7. This Oryza sativa subsp. japonica (Rice) protein is Phospho-2-dehydro-3-deoxyheptonate aldolase 2, chloroplastic (DAHPS2).